A 421-amino-acid polypeptide reads, in one-letter code: Acetate kinase (421 aa).

Residue Asn-7 participates in Mg(2+) binding. An ATP-binding site is contributed by Lys-14. Arg-91 provides a ligand contact to substrate. Catalysis depends on Asp-148, which acts as the Proton donor/acceptor. Residues 208–212 (HIGNG) and 283–285 (DRR) each bind ATP. Glu-387 is a binding site for Mg(2+).

This sequence belongs to the acetokinase family. Homodimer. Mg(2+) is required as a cofactor. Mn(2+) serves as cofactor.

It localises to the cytoplasm. The enzyme catalyses acetate + ATP = acetyl phosphate + ADP. The protein operates within metabolic intermediate biosynthesis; acetyl-CoA biosynthesis; acetyl-CoA from acetate: step 1/2. Its function is as follows. Catalyzes the formation of acetyl phosphate from acetate and ATP. Can also catalyze the reverse reaction. The sequence is that of Acetate kinase from Geobacter sulfurreducens (strain ATCC 51573 / DSM 12127 / PCA).